Here is a 273-residue protein sequence, read N- to C-terminus: Patr class II histocompatibility antigen, DO beta chain (273 aa).

Positions 1–26 (MGSGWVPWVVALLVNLTRLDSSMTQG) are cleaved as a signal peptide. Residues 27–120 (TDSPEDFVIQ…LGAPFTVGRK (94 aa)) form a beta-1 region. Residues 27–224 (TDSPEDFVIQ…RAQSEYSWKK (198 aa)) are Extracellular-facing. 2 disulfides stabilise this stretch: C41-C105 and C143-C199. N45 carries an N-linked (GlcNAc...) asparagine glycan. Residues 121 to 214 (VQPEVTVYPE…SLLSPVSVEW (94 aa)) form a beta-2 region. One can recognise an Ig-like C1-type domain in the interval 123 to 213 (PEVTVYPERT…SSLLSPVSVE (91 aa)). The tract at residues 215 to 224 (RAQSEYSWKK) is connecting peptide. The helical transmembrane segment at 225–245 (MLSGIAAFLLGLIFLLVGIVI) threads the bilayer. Topologically, residues 246 to 273 (QLRAQKGYVRTQMSGNEVSRAVLLPQSC) are cytoplasmic.

This sequence belongs to the MHC class II family. Heterodimer of an alpha chain (DOA) and a beta chain (DOB). Forms a heterotetrameric complex with an HLA-DM molecule during intracellular transport in endosomal/lysosomal compartments in B-cells.

Its subcellular location is the endosome membrane. It localises to the lysosome membrane. Important modulator in the HLA class II restricted antigen presentation pathway by interaction with the HLA-DM molecule in B-cells. Modifies peptide exchange activity of HLA-DM. This Pan troglodytes (Chimpanzee) protein is Patr class II histocompatibility antigen, DO beta chain (Patr-DOB).